Consider the following 263-residue polypeptide: Interleukin-33 (263 aa).

The segment covering 1–17 (MKYSTTKIPPAKMNSSA) has biased composition (polar residues). The interval 1–28 (MKYSTTKIPPAKMNSSADKALVKSPKLR) is disordered. The homeodomain-like HTH domain stretch occupies residues 1–65 (MKYSTTKIPP…CYFRKEITKR (65 aa)). An interaction with RELA region spans residues 62 to 103 (ITKRYSPRTAEKCRKQCLVFTACHQQLNKDFTSDVPMLQKCF).

The protein belongs to the IL-1 family. Highly divergent. As to quaternary structure, forms a 1:1:1 heterotrimeric complex with its primary high-affinity receptor IL1RL1 and the coreceptor IL1RAP. Interacts with cargo receptor TMED10; the interaction mediates the translocation from the cytoplasm into the ERGIC (endoplasmic reticulum-Golgi intermediate compartment) and thereby secretion. The full-length protein can be released from cells and is able to signal via the IL1RL1/ST2 receptor. However, proteolytic processing by CELA1, CSTG/cathepsin G and ELANE/neutrophil elastase produces C-terminal peptides that are more active than the unprocessed full-length protein. May also be proteolytically processed by calpains. Proteolytic cleavage mediated by apoptotic caspases including CASP3 and CASP7 results in IL33 inactivation. In vitro proteolytic cleavage by CASP1 was reported but could not be confirmed in vivo suggesting that IL33 is probably not a direct substrate for that caspase. Expressed in cultured umbilical artery smooth muscle cells after stimulation with IL1A and IL1B, and to a lesser extent with IFNG. Expressed in vasospastic cerebral arteries after subarachnoid hemorrhage.

Its subcellular location is the nucleus. The protein localises to the chromosome. It is found in the cytoplasm. It localises to the cytoplasmic vesicle. The protein resides in the secretory vesicle. Its subcellular location is the secreted. In terms of biological role, cytokine that binds to and signals through the IL1RL1/ST2 receptor which in turn activates NF-kappa-B and MAPK signaling pathways in target cells. Involved in the maturation of Th2 cells inducing the secretion of T-helper type 2-associated cytokines. Also involved in activation of mast cells, basophils, eosinophils and natural killer cells. Acts as a chemoattractant for Th2 cells, and may function as an 'alarmin', that amplifies immune responses during tissue injury. Induces rapid UCP2-dependent mitochondrial rewiring that attenuates the generation of reactive oxygen species and preserves the integrity of Krebs cycle required for persistent production of itaconate and subsequent GATA3-dependent differentiation of inflammation-resolving alternatively activated macrophages. In quiescent endothelia the uncleaved form is constitutively and abundantly expressed, and acts as a chromatin-associated nuclear factor with transcriptional repressor properties, it may sequester nuclear NF-kappaB/RELA, lowering expression of its targets. This form is rapidely lost upon angiogenic or pro-inflammatory activation. In Canis lupus familiaris (Dog), this protein is Interleukin-33 (IL33).